The following is a 150-amino-acid chain: Suppressor of HU sensitivity involved in recombination protein 1 (150 aa).

Component of the SHU complex composed of at least CSM2, PSY3, SHU1 and SHU2.

The protein localises to the nucleus. In terms of biological role, plays a role in a RAD51/RAD54-dependent homologous recombination repair (HRR) pathway to repair MMS-induced lesions during S-phase. This is Suppressor of HU sensitivity involved in recombination protein 1 (SHU1) from Saccharomyces cerevisiae (strain ATCC 204508 / S288c) (Baker's yeast).